The sequence spans 309 residues: Lipoyl synthase (309 aa).

Residues cysteine 43, cysteine 48, cysteine 54, cysteine 70, cysteine 74, cysteine 77, and serine 283 each coordinate [4Fe-4S] cluster. One can recognise a Radical SAM core domain in the interval 56 to 272 (AVRKTATFMI…KEIAMQKGFS (217 aa)).

This sequence belongs to the radical SAM superfamily. Lipoyl synthase family. [4Fe-4S] cluster is required as a cofactor.

It localises to the cytoplasm. It catalyses the reaction [[Fe-S] cluster scaffold protein carrying a second [4Fe-4S](2+) cluster] + N(6)-octanoyl-L-lysyl-[protein] + 2 oxidized [2Fe-2S]-[ferredoxin] + 2 S-adenosyl-L-methionine + 4 H(+) = [[Fe-S] cluster scaffold protein] + N(6)-[(R)-dihydrolipoyl]-L-lysyl-[protein] + 4 Fe(3+) + 2 hydrogen sulfide + 2 5'-deoxyadenosine + 2 L-methionine + 2 reduced [2Fe-2S]-[ferredoxin]. It participates in protein modification; protein lipoylation via endogenous pathway; protein N(6)-(lipoyl)lysine from octanoyl-[acyl-carrier-protein]. Functionally, catalyzes the radical-mediated insertion of two sulfur atoms into the C-6 and C-8 positions of the octanoyl moiety bound to the lipoyl domains of lipoate-dependent enzymes, thereby converting the octanoylated domains into lipoylated derivatives. This Shouchella clausii (strain KSM-K16) (Alkalihalobacillus clausii) protein is Lipoyl synthase.